We begin with the raw amino-acid sequence, 554 residues long: 3-(3-hydroxy-phenyl)propionate/3-hydroxycinnamic acid hydroxylase (554 aa).

FAD-binding positions include 17–46 (QVAI…VVEK) and 285–295 (FRIDRVLLAGD).

It belongs to the PheA/TfdB FAD monooxygenase family. It depends on FAD as a cofactor.

The catalysed reaction is 3-(3-hydroxyphenyl)propanoate + NADH + O2 + H(+) = 3-(2,3-dihydroxyphenyl)propanoate + NAD(+) + H2O. It catalyses the reaction (2E)-3-(3-hydroxyphenyl)prop-2-enoate + NADH + O2 + H(+) = (2E)-3-(2,3-dihydroxyphenyl)prop-2-enoate + NAD(+) + H2O. The protein operates within aromatic compound metabolism; 3-phenylpropanoate degradation. Functionally, catalyzes the insertion of one atom of molecular oxygen into position 2 of the phenyl ring of 3-(3-hydroxyphenyl)propionate (3-HPP) and hydroxycinnamic acid (3HCI). The polypeptide is 3-(3-hydroxy-phenyl)propionate/3-hydroxycinnamic acid hydroxylase (Shigella sonnei (strain Ss046)).